Reading from the N-terminus, the 374-residue chain is N5-carboxyaminoimidazole ribonucleotide synthase (374 aa).

Residues Arg-108, Lys-148, 153–159 (GYDGKGQ), 183–186 (EKYL), Glu-191, His-214, and 266–267 (NE) contribute to the ATP site. Residues 112-296 (KETLKSAGTK…QFDTHILAVT (185 aa)) form the ATP-grasp domain.

This sequence belongs to the PurK/PurT family. Homodimer.

It carries out the reaction 5-amino-1-(5-phospho-beta-D-ribosyl)imidazole + hydrogencarbonate + ATP = 5-carboxyamino-1-(5-phospho-D-ribosyl)imidazole + ADP + phosphate + 2 H(+). Its pathway is purine metabolism; IMP biosynthesis via de novo pathway; 5-amino-1-(5-phospho-D-ribosyl)imidazole-4-carboxylate from 5-amino-1-(5-phospho-D-ribosyl)imidazole (N5-CAIR route): step 1/2. Functionally, catalyzes the ATP-dependent conversion of 5-aminoimidazole ribonucleotide (AIR) and HCO(3)(-) to N5-carboxyaminoimidazole ribonucleotide (N5-CAIR). The chain is N5-carboxyaminoimidazole ribonucleotide synthase from Staphylococcus aureus (strain MSSA476).